The following is a 164-amino-acid chain: Interleukin-36 beta (164 aa).

Positions 1-4 (MNPQ) are excised as a propeptide.

The protein belongs to the IL-1 family. As to quaternary structure, interacts with cargo receptor TMED10; the interaction mediates the translocation from the cytoplasm into the ERGIC (endoplasmic reticulum-Golgi intermediate compartment) and thereby secretion. N-terminal truncation leads to a dramatic enhancement of its activity (&gt;1000-fold). As to expression, expression at low levels in tonsil, bone marrow, heart, placenta, lung, testis and colon but not in any hematopoietic cell lines. Not detected in adipose tissue. Expressed at higher levels in psoriatic plaques than in symptomless psoriatic skin or healthy control skin. Increased levels are not detected in inflamed joint tissue.

The protein resides in the cytoplasm. It localises to the secreted. Its function is as follows. Cytokine that binds to and signals through the IL1RL2/IL-36R receptor which in turn activates NF-kappa-B and MAPK signaling pathways in target cells linked to a pro-inflammatory response. Part of the IL-36 signaling system that is thought to be present in epithelial barriers and to take part in local inflammatory response; similar to the IL-1 system with which it shares the coreceptor IL1RAP. Stimulates production of interleukin-6 and interleukin-8 in synovial fibrobasts, articular chondrocytes and mature adipocytes. Induces expression of a number of antimicrobial peptides including beta-defensins 4 and 103 as well as a number of matrix metalloproteases. Seems to be involved in skin inflammatory response by acting on keratinocytes, dendritic cells and indirectly on T-cells to drive tissue infiltration, cell maturation and cell proliferation. In cultured keratinocytes induces the expression of macrophage, T-cell, and neutrophil chemokines, such as CCL3, CCL4, CCL5, CCL2, CCL17, CCL22, CL20, CCL5, CCL2, CCL17, CCL22, CXCL8, CCL20 and CXCL1, and the production of pro-inflammatory cytokines such as TNF-alpha, IL-8 and IL-6. The protein is Interleukin-36 beta of Homo sapiens (Human).